Consider the following 549-residue polypeptide: CTP synthase (549 aa).

The interval 1 to 267 (MAKFVFITGG…CREVLDVLNL (267 aa)) is amidoligase domain. S13 lines the CTP pocket. S13 provides a ligand contact to UTP. ATP is bound by residues 14 to 19 (SIGKGI) and D71. Residues D71 and E141 each contribute to the Mg(2+) site. CTP is bound by residues 148-150 (DIE), 188-193 (KTKPTQ), and K224. Residues 188-193 (KTKPTQ) and K224 contribute to the UTP site. Positions 292–534 (KIALVGKYVQ…IEAAQQRLPD (243 aa)) constitute a Glutamine amidotransferase type-1 domain. G354 contacts L-glutamine. The active-site Nucleophile; for glutamine hydrolysis is C381. Residues 382–385 (LGMQ), E405, and R462 contribute to the L-glutamine site. Catalysis depends on residues H507 and E509.

This sequence belongs to the CTP synthase family. As to quaternary structure, homotetramer.

It carries out the reaction UTP + L-glutamine + ATP + H2O = CTP + L-glutamate + ADP + phosphate + 2 H(+). The enzyme catalyses L-glutamine + H2O = L-glutamate + NH4(+). The catalysed reaction is UTP + NH4(+) + ATP = CTP + ADP + phosphate + 2 H(+). It participates in pyrimidine metabolism; CTP biosynthesis via de novo pathway; CTP from UDP: step 2/2. With respect to regulation, allosterically activated by GTP, when glutamine is the substrate; GTP has no effect on the reaction when ammonia is the substrate. The allosteric effector GTP functions by stabilizing the protein conformation that binds the tetrahedral intermediate(s) formed during glutamine hydrolysis. Inhibited by the product CTP, via allosteric rather than competitive inhibition. In terms of biological role, catalyzes the ATP-dependent amination of UTP to CTP with either L-glutamine or ammonia as the source of nitrogen. Regulates intracellular CTP levels through interactions with the four ribonucleotide triphosphates. This is CTP synthase from Synechococcus sp. (strain CC9605).